The chain runs to 333 residues: Secreted mono- and diacylglycerol lipase 1 (333 aa).

The N-terminal stretch at 1-16 is a signal peptide; it reads MMLILSILSIIAFAAA. 2 disulfides stabilise this stretch: Cys56–Cys268 and Cys276–Cys298. The Nucleophile role is filled by Ser176. Residues Asp230 and His288 contribute to the active site.

The protein belongs to the AB hydrolase superfamily. Lipase family. Class 3 subfamily.

The protein localises to the secreted. It catalyses the reaction a monoacylglycerol + H2O = glycerol + a fatty acid + H(+). The catalysed reaction is a diacylglycerol + H2O = a monoacylglycerol + a fatty acid + H(+). In terms of biological role, secreted mono- and diacylglycerol lipase that allows the use of hydrolyzed lipids as carbon source and might play a role in pathogenicity. Shows lipolytic activity towards olive oil and p-nitrophenylpalmitate. This chain is Secreted mono- and diacylglycerol lipase 1, found in Fusarium solani (Filamentous fungus).